Here is a 129-residue protein sequence, read N- to C-terminus: Azurin-2 (129 aa).

Residues 1–129 (AQCEATVESN…MMKGTLKLGS (129 aa)) enclose the Plastocyanin-like domain. Residues Cys-3 and Cys-26 are joined by a disulfide bond. Residues His-46, Cys-112, His-117, and Met-121 each contribute to the Cu cation site.

It is found in the periplasm. Functionally, transfers electrons from cytochrome c551 to cytochrome oxidase. In Alcaligenes xylosoxydans xylosoxydans (Achromobacter xylosoxidans), this protein is Azurin-2.